The following is a 561-amino-acid chain: Arginine--tRNA ligase (561 aa).

The 'HIGH' region signature appears at 128–138 (ANPTGPLHVGH).

It belongs to the class-I aminoacyl-tRNA synthetase family. In terms of assembly, monomer.

The protein resides in the cytoplasm. It carries out the reaction tRNA(Arg) + L-arginine + ATP = L-arginyl-tRNA(Arg) + AMP + diphosphate. The chain is Arginine--tRNA ligase from Leptothrix cholodnii (strain ATCC 51168 / LMG 8142 / SP-6) (Leptothrix discophora (strain SP-6)).